A 779-amino-acid polypeptide reads, in one-letter code: Vezatin (779 aa).

A run of 2 helical transmembrane segments spans residues Leu139–Met159 and Thr162–Ile182. Residues Val430–Glu462 are a coiled coil. Disordered stretches follow at residues Pro618–Gln719 and Glu757–Lys779. Positions Ile625–Ser634 are enriched in polar residues. Positions Lys638–Asn649 are enriched in basic and acidic residues. The segment covering Gly706–Gln719 has biased composition (polar residues). Basic and acidic residues predominate over residues Glu770 to Lys779.

This sequence belongs to the vezatin family. Interacts with USH2A (via the cytoplasmic region); the interaction associates VEZT with the USH2 complex at the stereocilia base. Interacts with myosin MYO7A and the cadherin-catenins complex.

It is found in the cell membrane. The protein resides in the cell projection. It localises to the stereocilium membrane. Its subcellular location is the cell junction. The protein localises to the adherens junction. It is found in the nucleus. The protein resides in the cytoplasmic vesicle. It localises to the secretory vesicle. Its subcellular location is the acrosome. Its function is as follows. Plays a pivotal role in the establishment of adherens junctions and their maintenance in adult life. Required for morphogenesis of the preimplantation embryo, and for the implantation process. (Microbial infection) In case of Listeria infection, promotes bacterial internalization by participating in myosin VIIa recruitment to the entry site. The protein is Vezatin (VEZT) of Homo sapiens (Human).